The primary structure comprises 2130 residues: Dedicator of cytokinesis protein 7 (2130 aa).

Serine 30 is subject to Phosphoserine. Positions 137–175 (GFNPNTLDKQKERQKGLPRQVFESDEAPDGSSYQDEQDD) are disordered. Phosphoserine is present on residues serine 180 and serine 182. The stretch at 365–395 (FKEADATKNKEKLEKLKSQADQFCQRLGKYR) forms a coiled coil. Position 381 is an N6-methyllysine (lysine 381). At threonine 450 the chain carries Phosphothreonine. Residue serine 452 is modified to Phosphoserine. The region spanning 561-727 (RNLLYIYPQS…GVFNVEVVAV (167 aa)) is the C2 DOCK-type domain. Phosphoserine is present on residues serine 862, serine 864, serine 882, serine 888, serine 896, serine 900, and serine 905. Low complexity predominate over residues 888 to 901 (SLNLNRSRSLSNSN). Residues 888–966 (SLNLNRSRSL…SCNRMSSHTE (79 aa)) are disordered. Threonine 907 and threonine 909 each carry phosphothreonine. 8 positions are modified to phosphoserine: serine 910, serine 929, serine 963, serine 1382, serine 1420, serine 1422, serine 1424, and serine 1428. Residues 942-966 (SNPSPSAESTQAMDRSCNRMSSHTE) show a composition bias toward polar residues. The DOCKER domain maps to 1668–2104 (KGYQTSPDLR…LQPLINRKIP (437 aa)). Position 1952 is an N6-acetyllysine (lysine 1952). A coiled-coil region spans residues 2076 to 2102 (DQKEYQRELERNYHRLKEALQPLINRK). At serine 2119 the chain carries Phosphoserine.

The protein belongs to the DOCK family. Component of the DOCK7-induced septin displacement/DISP complex, at least composed of DOCK7, LRCH3 and MYO6. Interacts with TSC1. Interacts with nucleotide-free RAC1 and RAC3. Interacts with TACC3. Interacts with CRY1. Interacts with NOD2.

Its subcellular location is the cell projection. The protein resides in the axon. Functionally, functions as a guanine nucleotide exchange factor (GEF), which activates Rac1 and Rac3 Rho small GTPases by exchanging bound GDP for free GTP. Does not have a GEF activity for CDC42. Required for STMN1 'Ser-15' phosphorylation during axon formation and consequently for neuronal polarization. As part of the DISP complex, may regulate the association of septins with actin and thereby regulate the actin cytoskeleton. Has a role in pigmentation. Involved in the regulation of cortical neurogenesis through the control of radial glial cells (RGCs) proliferation versus differentiation; negatively regulates the basal-to-apical interkinetic nuclear migration of RGCs by antagonizing the microtubule growth-promoting function of TACC3. This is Dedicator of cytokinesis protein 7 (Dock7) from Mus musculus (Mouse).